The following is a 309-amino-acid chain: Ankyrin repeat and SOCS box protein 12 (309 aa).

ANK repeat units follow at residues 63–92 (VPGT…DVDS), 96–125 (KAQT…SPGG), 129–158 (NNCS…EANV), 171–200 (SCSG…DPDY), and 213–243 (RPRT…NIYL). In terms of domain architecture, SOCS box spans 268-308 (PRSLLSQVRLVVRRALCQAGQPQAINQLDIPPMLISYLKHQ).

Belongs to the ankyrin SOCS box (ASB) family. In terms of assembly, interacts with CUL5 and RNF7.

The protein operates within protein modification; protein ubiquitination. Functionally, probable substrate-recognition component of a SCF-like ECS (Elongin-Cullin-SOCS-box protein) E3 ubiquitin-protein ligase complex which mediates the ubiquitination and subsequent proteasomal degradation of target proteins. The protein is Ankyrin repeat and SOCS box protein 12 (ASB12) of Homo sapiens (Human).